The following is a 922-amino-acid chain: Centrosomal protein of 104 kDa (922 aa).

Residues 210–277 (EVAQIIRRLD…DLAKEKKQQM (68 aa)) are a coiled coil. A compositionally biased stretch (low complexity) spans 307–318 (PLQPLASPSSPQ). Disordered regions lie at residues 307–333 (PLQP…EELA) and 348–419 (LASS…PLTE). A compositionally biased stretch (basic and acidic residues) spans 396–407 (PEVREADSDVRR). HEAT repeat units follow at residues 526–564 (AIPL…LQLI) and 601–637 (GFTV…YRQH). Composition is skewed to basic and acidic residues over residues 673–697 (TEAE…EETK) and 714–725 (QEKENEAVKLKN). 2 disordered regions span residues 673-741 (TEAE…TPEI) and 880-922 (PAPQ…HTRR). The stretch at 678-705 (KTQKRVVTKEAEKQKKEETKALQGLSAA) forms a coiled coil.

In terms of assembly, interacts with CCP110 and CEP97. Interacts with ARMC9, TOGARAM1, CCDC66 and CSPP1. Expressed predominantly in the brain. Also detected, although at much lower levels, in the heart and the liver. Within the brain, expressed in the cerebral cortex, hippocampus, cerebellum and brainstem.

It localises to the cell projection. It is found in the cilium. Its subcellular location is the cytoplasm. The protein resides in the cytoskeleton. The protein localises to the microtubule organizing center. It localises to the centrosome. It is found in the centriole. Its subcellular location is the spindle pole. Its function is as follows. Required for ciliogenesis and for structural integrity at the ciliary tip. The protein is Centrosomal protein of 104 kDa (Cep104) of Rattus norvegicus (Rat).